Consider the following 168-residue polypeptide: Crossover junction endodeoxyribonuclease RuvC (168 aa).

Residues aspartate 7, glutamate 64, and aspartate 136 contribute to the active site. Residues aspartate 7, glutamate 64, and aspartate 136 each contribute to the Mg(2+) site.

Belongs to the RuvC family. In terms of assembly, homodimer which binds Holliday junction (HJ) DNA. The HJ becomes 2-fold symmetrical on binding to RuvC with unstacked arms; it has a different conformation from HJ DNA in complex with RuvA. In the full resolvosome a probable DNA-RuvA(4)-RuvB(12)-RuvC(2) complex forms which resolves the HJ. Requires Mg(2+) as cofactor.

The protein localises to the cytoplasm. The catalysed reaction is Endonucleolytic cleavage at a junction such as a reciprocal single-stranded crossover between two homologous DNA duplexes (Holliday junction).. The RuvA-RuvB-RuvC complex processes Holliday junction (HJ) DNA during genetic recombination and DNA repair. Endonuclease that resolves HJ intermediates. Cleaves cruciform DNA by making single-stranded nicks across the HJ at symmetrical positions within the homologous arms, yielding a 5'-phosphate and a 3'-hydroxyl group; requires a central core of homology in the junction. The consensus cleavage sequence is 5'-(A/T)TT(C/G)-3'. Cleavage occurs on the 3'-side of the TT dinucleotide at the point of strand exchange. HJ branch migration catalyzed by RuvA-RuvB allows RuvC to scan DNA until it finds its consensus sequence, where it cleaves and resolves the cruciform DNA. The chain is Crossover junction endodeoxyribonuclease RuvC from Polynucleobacter necessarius subsp. necessarius (strain STIR1).